Here is a 120-residue protein sequence, read N- to C-terminus: Chaperonin GroEL (120 aa).

23–27 (DGTTT) is a binding site for ATP.

It belongs to the chaperonin (HSP60) family. In terms of assembly, forms a cylinder of 14 subunits composed of two heptameric rings stacked back-to-back. Interacts with the co-chaperonin GroES.

It localises to the cytoplasm. The enzyme catalyses ATP + H2O + a folded polypeptide = ADP + phosphate + an unfolded polypeptide.. In terms of biological role, together with its co-chaperonin GroES, plays an essential role in assisting protein folding. The GroEL-GroES system forms a nano-cage that allows encapsulation of the non-native substrate proteins and provides a physical environment optimized to promote and accelerate protein folding. The protein is Chaperonin GroEL of Mycolicibacterium chitae (Mycobacterium chitae).